The chain runs to 160 residues: Ribosomal RNA large subunit methyltransferase H (160 aa).

S-adenosyl-L-methionine contacts are provided by residues leucine 77, glycine 109, and 128–133 (LSNLTF).

This sequence belongs to the RNA methyltransferase RlmH family. In terms of assembly, homodimer.

It is found in the cytoplasm. It catalyses the reaction pseudouridine(1915) in 23S rRNA + S-adenosyl-L-methionine = N(3)-methylpseudouridine(1915) in 23S rRNA + S-adenosyl-L-homocysteine + H(+). Its function is as follows. Specifically methylates the pseudouridine at position 1915 (m3Psi1915) in 23S rRNA. In Desulforamulus reducens (strain ATCC BAA-1160 / DSM 100696 / MI-1) (Desulfotomaculum reducens), this protein is Ribosomal RNA large subunit methyltransferase H.